The sequence spans 181 residues: CDP-diacylglycerol--glycerol-3-phosphate 3-phosphatidyltransferase (181 aa).

4 helical membrane passes run 8 to 28, 35 to 55, 64 to 84, and 148 to 168; these read PNYL…TFYI, MLGA…GYIA, FGKM…IIML, and IIYL…LTII.

The protein belongs to the CDP-alcohol phosphatidyltransferase class-I family.

It is found in the cell membrane. The enzyme catalyses a CDP-1,2-diacyl-sn-glycerol + sn-glycerol 3-phosphate = a 1,2-diacyl-sn-glycero-3-phospho-(1'-sn-glycero-3'-phosphate) + CMP + H(+). It functions in the pathway phospholipid metabolism; phosphatidylglycerol biosynthesis; phosphatidylglycerol from CDP-diacylglycerol: step 1/2. Functionally, this protein catalyzes the committed step to the synthesis of the acidic phospholipids. The protein is CDP-diacylglycerol--glycerol-3-phosphate 3-phosphatidyltransferase (pgsA) of Rickettsia bellii (strain RML369-C).